A 242-amino-acid chain; its full sequence is C-reactive protein 1.4 (242 aa).

An N-terminal signal peptide occupies residues 1–24 (MKTFHGPTFGTAVFLYLLLFLTSA). Residues 30-241 (ITSKVKFPPS…GVVLSPNEIC (212 aa)) form the Pentraxin (PTX) domain. Phosphocholine contacts are provided by T60 and Y63. Cystine bridges form between C62–C125 and C112–C144. The Ca(2+) site is built by D85 and N86. An N-linked (GlcNAc...) asparagine glycan is attached at N147. Ca(2+)-binding residues include E168, Q169, D170, and Q180. A disulfide bridge connects residues C207 and C241.

This sequence belongs to the pentraxin family. In terms of assembly, homopentamer. Pentraxin (or pentaxin) have a discoid arrangement of 5 non-covalently bound subunits. Requires Ca(2+) as cofactor.

The protein localises to the secreted. Might serve the role of immunoglobulins. The sequence is that of C-reactive protein 1.4 from Limulus polyphemus (Atlantic horseshoe crab).